Consider the following 475-residue polypeptide: Ribulose bisphosphate carboxylase large chain (475 aa).

A propeptide spanning residues 1–2 is cleaved from the precursor; that stretch reads MS. N-acetylproline is present on proline 3. Residue lysine 14 is modified to N6,N6,N6-trimethyllysine. Residues asparagine 123 and threonine 173 each coordinate substrate. Lysine 175 functions as the Proton acceptor in the catalytic mechanism. Lysine 177 contributes to the substrate binding site. Mg(2+)-binding residues include lysine 201, aspartate 203, and glutamate 204. At lysine 201 the chain carries N6-carboxylysine. Residue histidine 294 is the Proton acceptor of the active site. Residues arginine 295, histidine 327, and serine 379 each contribute to the substrate site.

Belongs to the RuBisCO large chain family. Type I subfamily. Heterohexadecamer of 8 large chains and 8 small chains. Mg(2+) serves as cofactor.

It localises to the plastid. Its subcellular location is the chloroplast. It catalyses the reaction 2 (2R)-3-phosphoglycerate + 2 H(+) = D-ribulose 1,5-bisphosphate + CO2 + H2O. The enzyme catalyses D-ribulose 1,5-bisphosphate + O2 = 2-phosphoglycolate + (2R)-3-phosphoglycerate + 2 H(+). Its function is as follows. RuBisCO catalyzes two reactions: the carboxylation of D-ribulose 1,5-bisphosphate, the primary event in carbon dioxide fixation, as well as the oxidative fragmentation of the pentose substrate in the photorespiration process. Both reactions occur simultaneously and in competition at the same active site. This Nymphaea alba (White water-lily) protein is Ribulose bisphosphate carboxylase large chain.